Reading from the N-terminus, the 144-residue chain is Superoxide dismutase [Mn], mitochondrial (144 aa).

3 residues coordinate Mn(2+): H10, H58, and D143.

This sequence belongs to the iron/manganese superoxide dismutase family. Homotetramer. The cofactor is Mn(2+).

It is found in the mitochondrion matrix. The enzyme catalyses 2 superoxide + 2 H(+) = H2O2 + O2. Its function is as follows. Destroys superoxide anion radicals which are normally produced within the cells and which are toxic to biological systems. In Eptatretus stoutii (Pacific hagfish), this protein is Superoxide dismutase [Mn], mitochondrial.